The sequence spans 260 residues: Small ribosomal subunit protein eS1 (260 aa).

A compositionally biased stretch (basic residues) spans 1-18 (MAVGKNKRMSKGKKGGKK). Residues 1–20 (MAVGKNKRMSKGKKGGKKKA) are disordered.

It belongs to the eukaryotic ribosomal protein eS1 family. Component of the small ribosomal subunit. Mature ribosomes consist of a small (40S) and a large (60S) subunit. The 40S subunit contains about 33 different proteins and 1 molecule of RNA (18S). The 60S subunit contains about 49 different proteins and 3 molecules of RNA (25S, 5.8S and 5S).

It localises to the cytoplasm. The protein is Small ribosomal subunit protein eS1 of Ostreococcus lucimarinus (strain CCE9901).